The sequence spans 469 residues: Acetyl-CoA decarbonylase/synthase complex subunit beta 2 (469 aa).

Residues Cys-187, Cys-190, Cys-276, and Cys-278 each coordinate [Ni-Fe-S] cluster.

It belongs to the CdhC family. As to quaternary structure, monomer. The ACDS complex is made up of alpha, epsilon, beta, gamma and delta chains with a probable stoichiometry of (alpha(2)epsilon(2))(4)-beta(8)-(gamma(1)delta(1))(8) (Potential). [Ni-Fe-S] cluster serves as cofactor.

The catalysed reaction is Co(I)-[corrinoid Fe-S protein] + acetyl-CoA + H(+) = methyl-Co(III)-[corrinoid Fe-S protein] + CO + CoA. Part of a complex that catalyzes the reversible cleavage of acetyl-CoA, allowing autotrophic growth from CO(2). The alpha-epsilon complex generates CO from CO(2), while the beta subunit (this protein) combines the CO with CoA and a methyl group to form acetyl-CoA. The methyl group, which is incorporated into acetyl-CoA, is transferred to the beta subunit by a corrinoid iron-sulfur protein (the gamma-delta complex). The chain is Acetyl-CoA decarbonylase/synthase complex subunit beta 2 (cdhC2) from Methanocaldococcus jannaschii (strain ATCC 43067 / DSM 2661 / JAL-1 / JCM 10045 / NBRC 100440) (Methanococcus jannaschii).